The chain runs to 118 residues: Large ribosomal subunit protein bL20 (118 aa).

Belongs to the bacterial ribosomal protein bL20 family.

Binds directly to 23S ribosomal RNA and is necessary for the in vitro assembly process of the 50S ribosomal subunit. It is not involved in the protein synthesizing functions of that subunit. In Methylibium petroleiphilum (strain ATCC BAA-1232 / LMG 22953 / PM1), this protein is Large ribosomal subunit protein bL20.